The sequence spans 324 residues: Hydroxylase/desaturase CTB9 (324 aa).

Over residues 1–11 the composition is skewed to polar residues; that stretch reads MTSTITTTETL. Disordered stretches follow at residues 1-33 and 288-308; these read MTST…KELP and TARR…EPRA.

The protein belongs to the asaB hydroxylase/desaturase family.

It functions in the pathway mycotoxin biosynthesis. Its function is as follows. Hydroxylase/desaturase; part of the gene cluster that mediates the biosynthesis of cercosporin, a light-activated, non-host-selective toxin. The perylenequinone chromophore of cercosporin absorbs light energy to attain an electronically-activated triplet state and produces active oxygen species such as the hydroxyl radical, superoxide, hydrogen peroxide or singlet oxygen upon reaction with oxygen molecules. These reactive oxygen species cause damage to various cellular components including lipids, proteins and nucleic acids. The first step of cercosporin biosynthesis is performed by the polyketide synthase CTB1 which catalyzes the formation of nor-toralactone. The starter unit acyltransferase (SAT) domain of CTB1 initiates polyketide extension by the selective utilization of acetyl-CoA, which is elongated to the heptaketide in the beta-ketoacyl synthase (KS) domain by successive condensations with six malonyl units introduced by the malonyl acyltransferase (MAT) domain. The product template (PT) domain catalyzes C4-C9 and C2-C11 aldol cyclizations and dehydrations to a trihydroxynaphthalene, which is thought to be delivered to the thioesterase (TE) domain for product release. The bifunctional enzyme CTB3 then methylates nor-toralactone to toralactone before conducting an unusual oxidative aromatic ring opening. The O-methyltransferase CTB2 further methylates the nascent OH-6 of the CBT3 product, blocking further oxidation at this site before the reductase CTB6 reduces the 2-oxopropyl ketone at position C7, giving naphthalene. The FAD-dependent monooxygenase CTB5 in concert with the multicopper oxidase CTB12 are responsible for homodimerization of naphthalene with CTB7 installing the dioxepine moiety, finally producing cercosporin. The fasciclin domain-containing protein CTB11 might act with CTB5 and CTB12 whereas the roles of CTB9 and CTB10 have still to be elucidated. This is Hydroxylase/desaturase CTB9 from Cercospora beticola (Sugarbeet leaf spot fungus).